A 116-amino-acid chain; its full sequence is Large ribosomal subunit protein bL20 (116 aa).

Belongs to the bacterial ribosomal protein bL20 family.

Binds directly to 23S ribosomal RNA and is necessary for the in vitro assembly process of the 50S ribosomal subunit. It is not involved in the protein synthesizing functions of that subunit. In Fusobacterium nucleatum subsp. nucleatum (strain ATCC 25586 / DSM 15643 / BCRC 10681 / CIP 101130 / JCM 8532 / KCTC 2640 / LMG 13131 / VPI 4355), this protein is Large ribosomal subunit protein bL20.